Consider the following 333-residue polypeptide: Fe(3+)-citrate import system permease protein YfmE (333 aa).

A run of 8 helical transmembrane segments spans residues 12 to 32, 65 to 85, 95 to 115, 120 to 140, 194 to 214, 238 to 258, 279 to 299, and 306 to 326; these read LLAI…SIGI, IILA…LQGV, VVGI…IFPE, VLPF…LMIA, EVKL…ILIP, FILI…VGSI, YLLP…DTLG, and VEIP…LYLL.

The protein belongs to the binding-protein-dependent transport system permease family. FecCD subfamily. The complex is composed of one ATP-binding protein (YfmF), two transmembrane proteins (YfmD and YfmE) and a solute-binding protein (YfmC).

It is found in the cell membrane. Part of the ABC transporter complex YfmCDEF involved in citrate-dependent Fe(3+) import. Involved in the translocation of the substrate across the membrane. This Bacillus subtilis (strain 168) protein is Fe(3+)-citrate import system permease protein YfmE (yfmE).